A 441-amino-acid polypeptide reads, in one-letter code: Tryptophan aminotransferase-related protein 1 (441 aa).

Pyridoxal 5'-phosphate-binding positions include Tyr-110, 152–153, Asn-219, 239–242, 262–265, and Arg-273; these read ST, DLAY, and TVSK. Position 265 is an N6-(pyridoxal phosphate)lysine (Lys-265).

It belongs to the alliinase family. Pyridoxal 5'-phosphate serves as cofactor. Highly expressed in anthers. Expressed at low levels in ovaries.

It catalyses the reaction L-tryptophan + 2-oxoglutarate = indole-3-pyruvate + L-glutamate. It functions in the pathway plant hormone metabolism; auxin biosynthesis. Its function is as follows. Probable tryptophan aminotransferase that may be involved in the regulation of auxin production in developing rice grains. The protein is Tryptophan aminotransferase-related protein 1 of Oryza sativa subsp. japonica (Rice).